We begin with the raw amino-acid sequence, 306 residues long: MTMAYENFQNLGSEEKNQEAGKAPPQSFLCNILSWTHLLLFSLGLSLLLLVVISVIGSQNSQLRRDLETLRTTLDNTTSNTKAELQALASRGDSLQTGINSLKVEVDDHGQELQAGRGLSQKVASLESTVEKKEQTLRTDLSEITDRVQQLGKDLKTLTCQLASLKNNGSAVACCPLHWMEHEGSCYWFSQSGKPWPEADKYCQLENSNLVVVNSLAEQNFLQTHMGSVVTWIGLTDQNGPWRWVDGTDYEKGFTHWAPKQPDNWYGHGLGGGEDCAHFTSDGRWNDDVCQRPYRWVCEMKLAKDS.

Topologically, residues 1-37 (MTMAYENFQNLGSEEKNQEAGKAPPQSFLCNILSWTH) are cytoplasmic. A helical; Signal-anchor for type II membrane protein membrane pass occupies residues 38 to 58 (LLLFSLGLSLLLLVVISVIGS). Residues 59 to 306 (QNSQLRRDLE…VCEMKLAKDS (248 aa)) are Extracellular-facing. N-linked (GlcNAc...) asparagine glycans are attached at residues N76 and N168. The 127-residue stretch at 174-300 (CCPLHWMEHE…QRPYRWVCEM (127 aa)) folds into the C-type lectin domain. Cystine bridges form between C175-C186, C203-C298, and C276-C290.

Homooligomer.

The protein localises to the membrane. In terms of biological role, recognizes terminal galactose and N-acetylgalactosamine units. The chain is C-type lectin domain family 10 member A (Clec10a) from Rattus norvegicus (Rat).